We begin with the raw amino-acid sequence, 506 residues long: MEEFQRYFELDRYQQHDFLYPLIFQEYIYALAHDHGLNRSILLENAGYDKKSSLLIVKRLITRMYQQNHLIISANDSNQNPFLGHNKNLYSQMISEGFAVIVEIPFSLRLRSSLEGKEIVKSHNLQSIHSIFPFLEDKFLHLNYVLDILIPYPIHLEILVQTLRHWVKDASSLHLLRFFIHEYRNWNSLITPKRPSAHFSKRNQRLFLFLYNSHVCEYESIFIFLLTQSSHLRSTSSGVLLERIYFYGKLEHSVEVCAKDFKAILWLFKDPFIHYLRYQGKSILTSKGTSLLMNKWKYYLLNCWQCHFYVWSQPRRIYINQLSNHSLDFLGYLSSVRLNPSMVRSQMLENSFLIDNAIKKFDTIVPIIPMIGSLAKAKFCNVLGHPISKPVWADLSDSDIIDRFGRICRNLSHYHSGSSKKKTLYRIKYILRLSCARTLARKHKSTVRAFLKRVGSELLEEFFTEEEQVLSLTFPRAFSTSTSRGLYRRRIWYLDIICINDLANHE.

This sequence belongs to the intron maturase 2 family. MatK subfamily.

It is found in the plastid. The protein localises to the chloroplast. Usually encoded in the trnK tRNA gene intron. Probably assists in splicing its own and other chloroplast group II introns. The sequence is that of Maturase K from Mentzelia lindleyi (Blazing star).